The primary structure comprises 614 residues: WD repeat-containing protein 26 (614 aa).

Composition is skewed to low complexity over residues 1–19 (MQANGAAAAAAGEEPAGSG) and 34–44 (SNGVLSSNNGL). The disordered stretch occupies residues 1–65 (MQANGAAAAA…PGGRKKKRLS (65 aa)). In terms of domain architecture, LisH spans 67-99 (ADEDVIRLIGQHLHGLGLNQTVDLLMQESGCRL). In terms of domain architecture, CTLH spans 100–184 (EHPSATKFRN…EYLEDGKVLE (85 aa)). 6 WD repeats span residues 306 to 345 (EHCNEVWFCKFSNDGTKLATGSKDTTVIIWQVDPDTHQLK), 352 to 391 (GHAYGVSYLAWSPDDNYLIACGPDDCSELWLWNVQTGELR), 397 to 437 (SHED…DSWE), 477 to 516 (QEDHPIMSFTISRNGRLALLNVATQGVHLWDLQDRVLVRK), 519 to 561 (GVTQ…PIAE), and 564 to 604 (GHTR…DNQE).

As to quaternary structure, forms homooligomers. Identified in the CTLH complex that contains at least MAEA, RMND5A (or alternatively its paralog RMND5B), GID8, WDR26, and RANBP9 and/or RANBP10. Interacts with DDB1-CUL4A/B E3 ligase complexes.

Its subcellular location is the cytoplasm. It localises to the nucleus. The protein localises to the mitochondrion. Functionally, G-beta-like protein involved in cell signal transduction. Acts as a negative regulator in MAPK signaling pathway. Functions as a scaffolding protein to promote G beta:gamma-mediated PLCB2 plasma membrane translocation and subsequent activation in leukocytes. Core component of the CTLH E3 ubiquitin-protein ligase complex that mediates ubiquitination and subsequent proteasomal degradation of target proteins. Acts as a negative regulator of the canonical Wnt signaling pathway through preventing ubiquitination of beta-catenin CTNNB1 by the beta-catenin destruction complex, thus negatively regulating CTNNB1 degradation. Serves as a scaffold to coordinate PI3K/AKT pathway-driven cell growth and migration. Protects cells from oxidative stress-induced apoptosis via the down-regulation of AP-1 transcriptional activity as well as by inhibiting cytochrome c release from mitochondria. Also protects cells by promoting hypoxia-mediated autophagy and mitophagy. The protein is WD repeat-containing protein 26 (wdr26) of Xenopus tropicalis (Western clawed frog).